Reading from the N-terminus, the 600-residue chain is Cationic amino acid transporter 4, vacuolar (600 aa).

At 1-32 (MNSLVRRKQVDSVHLIKNDGPHQLAKKLSAVD) the chain is on the cytoplasmic side. The helical transmembrane segment at 33–53 (LVAIGVGTTIGAGVYILVGTV) threads the bilayer. Over 54 to 60 (AREHTGP) the chain is Vacuolar. A helical membrane pass occupies residues 61 to 81 (ALAVSFFIAGVAAALSACCYA). The Cytoplasmic segment spans residues 82–92 (ELASRCPSAGS). Residues 93–115 (AYHYAYICLGEGIAWLVGWALVL) traverse the membrane as a helical segment. Residues 116-152 (DYTIGGSAIARGITPNLASFFGGLDNLPVFLARQTIP) are Vacuolar-facing. A helical transmembrane segment spans residues 153 to 173 (GVGIVVDPCAALLIMIVTILL). The Cytoplasmic segment spans residues 174–184 (CFGIKESSTVQ). Residues 185–205 (AIVTSVNVCTLVFIIVVGGYL) form a helical membrane-spanning segment. Topologically, residues 206–220 (ACKTGWVGYDLPSGY) are vacuolar. The helical transmembrane segment at 221-241 (FPFGLNGILAGSAVVFFSYIG) threads the bilayer. Over 242-264 (FDTVTSTAEEVKNPQRDLPLGIG) the chain is Cytoplasmic. A helical transmembrane segment spans residues 265-285 (IALLICCILYMLLSVVIVGLV). Residues 286-308 (PYYSLNPDTPISSAFGDSGMQWA) are Vacuolar-facing. The chain crosses the membrane as a helical span at residues 309-329 (AYILTTGAITALCASLLGSLL). The Cytoplasmic segment spans residues 330-360 (AQPRIFMAMARDGLLPAFFSEISPRTQVPVK). Residues 361-381 (STIAIGVLAAALAFFMDVAQL) form a helical membrane-spanning segment. A topological domain (vacuolar) is located at residue Ser382. The chain crosses the membrane as a helical span at residues 383-403 (EMVSVGTLMAFTAVAVCVLVL). Residues 404–462 (RYVPPDGVPLSSSSQTLSDTDESRAETENFLVDAIESSDSPLLGNETARDEKYFGKRRK) lie on the Cytoplasmic side of the membrane. A helical transmembrane segment spans residues 463 to 483 (IAAWSIALVCIGVLGLASAAS). The Vacuolar segment spans residues 484–492 (AERLPSFPR). Residues 493–513 (FTICGVSAVILLGSLITLGYI) form a helical membrane-spanning segment. Over 514–528 (DEDEERHNFGHKGGF) the chain is Cytoplasmic. The chain crosses the membrane as a helical span at residues 529-549 (LCPFVPYLPVLCILINTYLII). Position 550 (Asn550) is a topological domain, vacuolar. A helical transmembrane segment spans residues 551 to 571 (IGAGTWIRVLIWLLIGSMIYI). Topologically, residues 572-600 (FYGRSHSLLNNAVYVPTMTCTRKTTDHLA) are cytoplasmic.

It belongs to the amino acid-polyamine-organocation (APC) superfamily. Cationic amino acid transporter (CAT) (TC 2.A.3.3) family. Expressed in roots, stems, flowers, and leaves.

Its subcellular location is the vacuole membrane. Functionally, permease involved in the transport of the cationic amino acids. The polypeptide is Cationic amino acid transporter 4, vacuolar (CAT4) (Arabidopsis thaliana (Mouse-ear cress)).